We begin with the raw amino-acid sequence, 159 residues long: uncharacterized protein (159 aa).

Helical transmembrane passes span 10–30 (FLSM…SLFF), 52–72 (MLIL…VILL), and 96–116 (LTLI…PFVT).

The protein localises to the membrane. This is an uncharacterized protein from Escherichia coli (strain K12).